The primary structure comprises 366 residues: IgG receptor FcRn large subunit p51 (366 aa).

Positions 1-22 (MGMSQPGVLLSLLLVLLPQTWG) are cleaved as a signal peptide. The segment at 23–111 (AEPRLPLMYH…RTLENQINGT (89 aa)) is alpha-1. At 23–298 (AEPRLPLMYH…VDLDSPARSS (276 aa)) the chain is on the extracellular side. 4 N-linked (GlcNAc...) asparagine glycosylation sites follow: N109, N126, N150, and N247. An alpha-2 region spans residues 112–201 (FTLQGLLGCE…ERGRQNLEWK (90 aa)). Cystine bridges form between C120–C183 and C222–C276. An alpha-3 region spans residues 202-291 (EPPSMRLKAR…GLAQPLTVDL (90 aa)). The Ig-like C1-type domain occupies 203-290 (PPSMRLKARP…EGLAQPLTVD (88 aa)). The segment at 293-298 (SPARSS) is connecting peptide. A helical transmembrane segment spans residues 299-322 (VPVVGIILGLLLVVVAIAGGVLLW). The Cytoplasmic portion of the chain corresponds to 323–366 (NRMRSGLPAPWLSLSGDDSGDLLPGGNLPPEAEPQGVNAFPATS). S335 bears the Phosphoserine mark. Residues 344-366 (LLPGGNLPPEAEPQGVNAFPATS) are disordered.

The protein belongs to the immunoglobulin superfamily. FcRn complex consists of two subunits: p51, and p14 which is equivalent to beta-2-microglobulin. It forms an MHC class I-like heterodimer. Interacts with albumin/ALB; this interaction regulates ALB homeostasis. Intestinal epithelium.

The protein localises to the cell membrane. It is found in the endosome membrane. Functionally, cell surface receptor that transfers passive humoral immunity from the mother to the newborn. Binds to the Fc region of monomeric immunoglobulin gamma and mediates its selective uptake from milk. IgG in the milk is bound at the apical surface of the intestinal epithelium. The resultant FcRn-IgG complexes are transcytosed across the intestinal epithelium and IgG is released from FcRn into blood or tissue fluids. Throughout life, contributes to effective humoral immunity by recycling IgG and extending its half-life in the circulation. Mechanistically, monomeric IgG binding to FcRn in acidic endosomes of endothelial and hematopoietic cells recycles IgG to the cell surface where it is released into the circulation. In addition of IgG, regulates homeostasis of the other most abundant circulating protein albumin/ALB. The polypeptide is IgG receptor FcRn large subunit p51 (Fcgrt) (Rattus norvegicus (Rat)).